The chain runs to 360 residues: Josephin-like protein (360 aa).

Residues 5–192 (ESKIYHERQR…NQLPLASNYR (188 aa)) form the Josephin domain. Residue Cys18 is the Nucleophile of the active site. Residue His129 is the Proton acceptor of the active site.

It catalyses the reaction Thiol-dependent hydrolysis of ester, thioester, amide, peptide and isopeptide bonds formed by the C-terminal Gly of ubiquitin (a 76-residue protein attached to proteins as an intracellular targeting signal).. Functionally, may act as a deubiquitinating enzyme. This is Josephin-like protein from Arabidopsis thaliana (Mouse-ear cress).